The chain runs to 261 residues: Sulfur carrier protein FdhD (261 aa).

The active-site Cysteine persulfide intermediate is C105. 245–250 (FIRGDR) contributes to the Mo-bis(molybdopterin guanine dinucleotide) binding site.

The protein belongs to the FdhD family.

The protein resides in the cytoplasm. Its function is as follows. Required for formate dehydrogenase (FDH) activity. Acts as a sulfur carrier protein that transfers sulfur from IscS to the molybdenum cofactor prior to its insertion into FDH. In Listeria monocytogenes serotype 4b (strain F2365), this protein is Sulfur carrier protein FdhD.